Reading from the N-terminus, the 191-residue chain is Thiol:disulfide interchange protein TxlA (191 aa).

The chain crosses the membrane as a helical span at residues 14–30; it reads ILVIAAALVLTILVVLG. The Thioredoxin domain occupies 27-148; the sequence is VVLGSRQPSA…LAANLDALVE (122 aa). Residues C69 and C72 are joined by a disulfide bond. Positions 165–185 are enriched in polar residues; sequence SADLQPSRSSQTDPRSHSGQV. A disordered region spans residues 165–191; the sequence is SADLQPSRSSQTDPRSHSGQVQDGVLD.

The protein belongs to the thioredoxin family.

The protein resides in the cell membrane. Its function is as follows. Required for disulfide bond formation in some proteins. Acts by transferring its disulfide bond to other proteins and is reduced in the process. The polypeptide is Thiol:disulfide interchange protein TxlA (txlA) (Synechococcus elongatus (strain ATCC 33912 / PCC 7942 / FACHB-805) (Anacystis nidulans R2)).